The sequence spans 435 residues: E3 ubiquitin-protein ligase RNFT1 (435 aa).

The tract at residues 1 to 62 is disordered; it reads MPLFLLSLPT…SSEDASTPQC (62 aa). Residues 16–34 show a composition bias toward basic and acidic residues; the sequence is GHERRQRPEAKTSGSEKKY. Residues 40-62 show a composition bias toward polar residues; that stretch reads ANRSQLHSPPGTGSSEDASTPQC. The next 6 membrane-spanning stretches (helical) occupy residues 158 to 178, 203 to 223, 233 to 253, 256 to 276, 298 to 318, and 323 to 343; these read ILIL…LGIG, IQCA…YYTF, IFLN…IVGI, FILK…PSFI, TFVP…FGNV, and LGIL…FGHL. The tract at residues 368 to 419 is required for ubiquitin ligase activity and for protection against ER stress-induced cell death; it reads CSDVDDICSICQAEFQKPILLICQHIFCEECMTLWFNREKTCPLCRTVISDH. The RING-type zinc finger occupies 375–413; sequence CSICQAEFQKPILLICQHIFCEECMTLWFNREKTCPLCR.

Expressed at highest levels in testis, lower levels in heart, liver, lung, and kidney. Not detected in brain, ovary, and uterus. Down-regulated in testis from patients with maturation arrest (MA) or Sertoli cell-only syndrome (SCOS). Ubiquitously expressed with high expression in testis.

It localises to the endoplasmic reticulum membrane. The catalysed reaction is S-ubiquitinyl-[E2 ubiquitin-conjugating enzyme]-L-cysteine + [acceptor protein]-L-lysine = [E2 ubiquitin-conjugating enzyme]-L-cysteine + N(6)-ubiquitinyl-[acceptor protein]-L-lysine.. Its pathway is protein modification; protein ubiquitination. E3 ubiquitin-protein ligase that acts in the endoplasmic reticulum (ER)-associated degradation (ERAD) pathway, which targets misfolded proteins that accumulate in the endoplasmic reticulum (ER) for ubiquitination and subsequent proteasome-mediated degradation. Protects cells from ER stress-induced apoptosis. The protein is E3 ubiquitin-protein ligase RNFT1 (RNFT1) of Homo sapiens (Human).